A 107-amino-acid polypeptide reads, in one-letter code: Putative septation protein SpoVG (107 aa).

Positions 82 to 107 (ETDEVIPDKNAQPSSDSEDNGSEEEA) are disordered. Residues 97–107 (DSEDNGSEEEA) are compositionally biased toward acidic residues.

This sequence belongs to the SpoVG family.

Its function is as follows. Could be involved in septation. This chain is Putative septation protein SpoVG, found in Staphylococcus carnosus (strain TM300).